We begin with the raw amino-acid sequence, 1156 residues long: Pesticidal crystal protein Cry9Aa (1156 aa).

Positions 1-23 are cleaved as a propeptide — removed in mature form; sequence MNQNKHGIIGASNCGCASDDVAK.

It belongs to the delta endotoxin family.

Promotes colloidosmotic lysis by binding to the midgut epithelial cells of insects. This protein is toxic to Galleria mellonella. This Bacillus thuringiensis subsp. galleriae protein is Pesticidal crystal protein Cry9Aa (cry9Aa).